A 169-amino-acid polypeptide reads, in one-letter code: Peptide deformylase 1 (169 aa).

The Fe cation site is built by Cys92 and His134. Residue Glu135 is part of the active site. His138 lines the Fe cation pocket.

Belongs to the polypeptide deformylase family. Fe(2+) is required as a cofactor.

It catalyses the reaction N-terminal N-formyl-L-methionyl-[peptide] + H2O = N-terminal L-methionyl-[peptide] + formate. In terms of biological role, removes the formyl group from the N-terminal Met of newly synthesized proteins. Requires at least a dipeptide for an efficient rate of reaction. N-terminal L-methionine is a prerequisite for activity but the enzyme has broad specificity at other positions. The chain is Peptide deformylase 1 from Ralstonia nicotianae (strain ATCC BAA-1114 / GMI1000) (Ralstonia solanacearum).